A 145-amino-acid polypeptide reads, in one-letter code: AP-2 complex subunit sigma (145 aa).

It belongs to the adaptor complexes small subunit family. Adaptor protein complex 2 (AP-2) is a heterotetramer composed of two large adaptins (alpha-type subunit apl3 and beta-type subunit apl1), a medium chain (mu-type subunit apm4) and a small adaptin (sigma-type subunit aps2).

It localises to the cell membrane. Its subcellular location is the membrane. The protein localises to the coated pit. In terms of biological role, component of the adaptor complexes which link clathrin to receptors in coated vesicles. Clathrin-associated protein complexes are believed to interact with the cytoplasmic tails of membrane proteins, leading to their selection and concentration. This is AP-2 complex subunit sigma (aps2) from Emericella nidulans (strain FGSC A4 / ATCC 38163 / CBS 112.46 / NRRL 194 / M139) (Aspergillus nidulans).